Consider the following 1280-residue polypeptide: Fibronectin type III domain-containing protein (1280 aa).

The N-terminal stretch at 1-19 is a signal peptide; sequence MWQILLAISIFSLSKLSNA. Topologically, residues 20–1156 are extracellular; it reads QQQPKVAPPQ…RVSTPIYQSA (1137 aa). 5 disulfide bridges follow: C58-C111, C268-C321, C369-C417, C460-C511, and C553-C604. Fibronectin type-III domains follow at residues 628–722, 730–824, 830–933, 939–1033, and 1039–1131; these read PFPP…TGSF, PEKW…VKQF, PTGK…VAAD, PGPP…TEKT, and PAKP…PASD. Residues 1118–1130 are compositionally biased toward polar residues; it reads YPSQENPQESPAS. The segment at 1118–1144 is disordered; it reads YPSQENPQESPASDITEARPRPGISNV. A helical membrane pass occupies residues 1157–1177; the sequence is WFIALLVLIALLLLVLLTFVL. Residues 1178-1280 are Cytoplasmic-facing; it reads YTRHQGAKYL…KDPSSLATFV (103 aa). Residues 1206–1280 form a disordered region; the sequence is DEEEGSFSNN…KDPSSLATFV (75 aa). Basic and acidic residues predominate over residues 1262–1273; the sequence is DEKKAPPEEKDP.

In terms of tissue distribution, component of the acid-insoluble organic matrix of the aragonitic skeleton (at protein level).

Its subcellular location is the membrane. This chain is Fibronectin type III domain-containing protein, found in Acropora millepora (Staghorn coral).